A 281-amino-acid polypeptide reads, in one-letter code: Phosphatidylglycerol--prolipoprotein diacylglyceryl transferase (281 aa).

A run of 3 helical transmembrane segments spans residues 11–31 (IIFT…VISF), 57–77 (LLYS…IIFY), and 89–109 (VFYI…AIIV). Residue R140 participates in a 1,2-diacyl-sn-glycero-3-phospho-(1'-sn-glycerol) binding. 3 helical membrane-spanning segments follow: residues 194–214 (PTQL…IYFF), 222–242 (GSIS…IEFF), and 255–275 (IITM…IIMY).

This sequence belongs to the Lgt family.

The protein resides in the cell inner membrane. The catalysed reaction is L-cysteinyl-[prolipoprotein] + a 1,2-diacyl-sn-glycero-3-phospho-(1'-sn-glycerol) = an S-1,2-diacyl-sn-glyceryl-L-cysteinyl-[prolipoprotein] + sn-glycerol 1-phosphate + H(+). It participates in protein modification; lipoprotein biosynthesis (diacylglyceryl transfer). Catalyzes the transfer of the diacylglyceryl group from phosphatidylglycerol to the sulfhydryl group of the N-terminal cysteine of a prolipoprotein, the first step in the formation of mature lipoproteins. This is Phosphatidylglycerol--prolipoprotein diacylglyceryl transferase from Buchnera aphidicola subsp. Acyrthosiphon pisum (strain APS) (Acyrthosiphon pisum symbiotic bacterium).